The sequence spans 807 residues: DNA gyrase subunit B (807 aa).

One can recognise a Toprim domain in the interval 429–543; sequence SELFIVEGDS…KGYLYIAQPP (115 aa). Mg(2+)-binding residues include E435, D508, and D510.

The protein belongs to the type II topoisomerase GyrB family. Heterotetramer, composed of two GyrA and two GyrB chains. In the heterotetramer, GyrA contains the active site tyrosine that forms a transient covalent intermediate with DNA, while GyrB binds cofactors and catalyzes ATP hydrolysis. Mg(2+) serves as cofactor. Mn(2+) is required as a cofactor. The cofactor is Ca(2+).

It localises to the cytoplasm. It catalyses the reaction ATP-dependent breakage, passage and rejoining of double-stranded DNA.. Functionally, a type II topoisomerase that negatively supercoils closed circular double-stranded (ds) DNA in an ATP-dependent manner to modulate DNA topology and maintain chromosomes in an underwound state. Negative supercoiling favors strand separation, and DNA replication, transcription, recombination and repair, all of which involve strand separation. Also able to catalyze the interconversion of other topological isomers of dsDNA rings, including catenanes and knotted rings. Type II topoisomerases break and join 2 DNA strands simultaneously in an ATP-dependent manner. In Rickettsia typhi (strain ATCC VR-144 / Wilmington), this protein is DNA gyrase subunit B.